A 1225-amino-acid polypeptide reads, in one-letter code: Mediator of RNA polymerase II transcription subunit 13 (1225 aa).

Belongs to the Mediator complex subunit 13 family. Component of the srb8-11 complex which consists of rb8, srb9(TRAP240), srb10 and srb11. The srb8-11 complex associates with the Mediator complex thereby blocking association with RNA polymerase II and leading to reduced transcriptional activation by Mediator.

Its subcellular location is the nucleus. Functionally, component of the srb8-11 complex. The srb8-11 complex is a regulatory module of the Mediator complex which is itself involved in regulation of basal and activated RNA polymerase II-dependent transcription. The srb8-11 complex may be involved in the transcriptional repression of a subset of genes regulated by Mediator. It may inhibit the association of the Mediator complex with RNA polymerase II to form the holoenzyme complex. The protein is Mediator of RNA polymerase II transcription subunit 13 (srb9) of Schizosaccharomyces pombe (strain 972 / ATCC 24843) (Fission yeast).